The chain runs to 337 residues: Inositol 2-dehydrogenase (337 aa).

The protein belongs to the Gfo/Idh/MocA family. In terms of assembly, homotetramer.

It catalyses the reaction myo-inositol + NAD(+) = scyllo-inosose + NADH + H(+). Functionally, involved in the oxidation of myo-inositol (MI) to 2-keto-myo-inositol (2KMI or 2-inosose). The chain is Inositol 2-dehydrogenase from Burkholderia cenocepacia (strain HI2424).